The primary structure comprises 210 residues: MINILILDTDIGIRNSLKLYLTEIGFHVEESTCVDQAWDILKRKKIDLIICDIIMPGMGGFNFLHQLRLNTDYCTLPVILLTTRGLTQDRIIGYKTGCDSYISKPFNIEELVVIIEGVLNRHTLIRLKLEKKQKNSFLLIKSNNLKINFTPREQSVLNLVVEGLLNKQIAANLNISIRIVEKYVSRLFIKTKTRNRAELVKYALENNLIT.

The region spanning 3-119 is the Response regulatory domain; the sequence is NILILDTDIG…ELVVIIEGVL (117 aa). Asp52 bears the 4-aspartylphosphate mark. One can recognise an HTH luxR-type domain in the interval 142–207; it reads SNNLKINFTP…ELVKYALENN (66 aa).

The protein resides in the plastid. The protein localises to the cyanelle. The sequence is that of Probable transcriptional regulator ycf29 (ycf29) from Cyanophora paradoxa.